The following is a 512-amino-acid chain: MSKKDCILAIDQGTTSTRSIVFGKDAQALAISRREFPQHYPELGWVEHDVEDIWRDVLATARETIEEVGGPERIAALGITNQRETIVIWDRETGRAIHRALVWQDRRTAHECNLLRQQGKEAMVREKTGLLLDPYFSASKIAWLLDHVPDARRRAEAGELAAGTIDSFLLWRLTGGKRHATDITNACRTSLFNIHTQEWDEELLKLFNVPRALLPEVCDNSSDFGETEAKLFGEKIAIGGMAGDQHAAVIGQACFHEGMAKATYGTGCFMLLNTGEKPIMSNNRLLTTIAYRIGGKTFYALEGSIFVAGAGIKWLRDGLKLITHASQTDDMATRIPDSHGVYMVPAFVGLGAPHWDPDSRGLICGLTLGSTQAHIARAMLESVAYQTYDLIRAMREDGAMRTSILRIDGGMAVNDWFAQFLSSMLKAEVERPVNIETTALGAAFLAGLQVGLWKSLDEVTATWKQERVFAPKMDPAQRRIMIDGWHDAVRRTLTPSAPVAHSSVETTASQAA.

T14 is an ADP binding site. Positions 14, 15, and 16 each coordinate ATP. Position 14 (T14) interacts with sn-glycerol 3-phosphate. An ADP-binding site is contributed by R18. Sn-glycerol 3-phosphate contacts are provided by R83, E84, Y135, and D244. Glycerol-binding residues include R83, E84, Y135, D244, and Q245. ADP-binding residues include T266, G309, G410, and N414. Residues T266, G309, and G410 each coordinate ATP.

It belongs to the FGGY kinase family.

The enzyme catalyses glycerol + ATP = sn-glycerol 3-phosphate + ADP + H(+). Its pathway is polyol metabolism; glycerol degradation via glycerol kinase pathway; sn-glycerol 3-phosphate from glycerol: step 1/1. With respect to regulation, inhibited by fructose 1,6-bisphosphate (FBP). In terms of biological role, key enzyme in the regulation of glycerol uptake and metabolism. Catalyzes the phosphorylation of glycerol to yield sn-glycerol 3-phosphate. The sequence is that of Glycerol kinase from Gluconobacter oxydans (strain 621H) (Gluconobacter suboxydans).